We begin with the raw amino-acid sequence, 1343 residues long: MGYSYSEKKRIRKDFGKRPQVLNVPYLLTIQLDSFDKFIQKDPEGQQGLEAAFRSVFPIVSNNGYTELQYVDYRLEEPEFDVRECQIRGSTYAAGLRVKLRLVSYDKESSSRAVKDIKENEVYMGEIPLMTDNGTFVINGTERVIVSQLHRSPGVFFDSDKGKTHSSGKVLYNARIIPYRGSWLDFEFDPKDNLFARIDRRRKLPATIILRALGYTTEEILNLFFDKITFEIAGDKLLMTLVPERLRGETASFDIEANGKVYVERGRRITARHIKALEKDNISQVVVPSEYILGKVASKDYVDLESGEIICPANGEISLETLAKLAQAGYTTIETLFTNDLDYGPYISETLRVDPTYDKTSALYEIYRMMRPGEPPTPESSEALFNNLFFSAERYDLSTVGRMKFNRSLAFPEGEGAGILSNEDIIAVMRKLIDIRNGRGEVDDIDHLGNRRIRSVGEMAENQFRIGLVRVERAVKERLSLGDLDAITPQDLINPKPISAAVKEFFGSSQLSQFMDQNNPLSEVTHKRRISALGPGGLTRERAGFEVRDVHNTHYGRLCPIETPEGPNIGLINSLSAFARTNDYGFLETPYRKVVDGQVTEEIEYLSVIDEANYIIAQANSNLDENNRFTDAFVTARGERGESGLYKPEDIHYMDVSTQQVVSVAAALIPFLEHDDANRALMGANMQRQAVPTLRADKPLVGTGMEKPIALDSGVAVVAKRGGTVQYVDASRIVIKVNEDETIAGEAGIDIYNLIKYTRSNQNTCINQIPCVNLGDPINRGEVLADGPSTDLGELALGQNIRVAFMPWNGYNFEDSMLVSERVVQQDRFTTIHIQELSCVARDTKLGAEEITADIPNVGESALSKLDESGIVYVGAEVKGGDILVGKVTPKGETQLTPEEKLLRAIFGEKASDVKDSSLRVPNGTSGTVIDVQVFTRDGVEKDKRALEIEEMQLREAKKDLTEELEILEAGLFARVRNLLISSGADAAQLDKVDRTKWLEQTIADEEKQNQLEQLAEQYEELRKEFEHKLEVKRKKIIKGDDLAPGVLKVVKVYLAVKRQIQPGDKMAGRHGNKGVISKINPVEDMPYDENGQPVEIVLNPLGVPSRMNIGQILETHLGLAAKGIGDQINAMLKQKQEVEKLRSYIQKAYDLLGNGSQKVDLSTFTDEEVLRLAGNLRKGLPVATPVFDGADEAEIKELLKLGGLPTSGQITLYDGRTGEKFERPVTVGYMYMLKLNHLVDDKMHARSTGSYSLVTQQPLGGKAQFGGQRFGEMEVWALEAYGAAYTLQEMLTVKSDDVNGRTKMYKNIVSGNQHMEPGTPESFNVIMKEIRSLGLNIELDEE.

The protein belongs to the RNA polymerase beta chain family. As to quaternary structure, the RNAP catalytic core consists of 2 alpha, 1 beta, 1 beta' and 1 omega subunit. When a sigma factor is associated with the core the holoenzyme is formed, which can initiate transcription.

The enzyme catalyses RNA(n) + a ribonucleoside 5'-triphosphate = RNA(n+1) + diphosphate. DNA-dependent RNA polymerase catalyzes the transcription of DNA into RNA using the four ribonucleoside triphosphates as substrates. The chain is DNA-directed RNA polymerase subunit beta from Haemophilus influenzae (strain 86-028NP).